The primary structure comprises 782 residues: E3 UFM1-protein ligase 1 homolog (782 aa).

A disordered region spans residues 405 to 478 (VSTQELEDDG…TRGGGGASKK (74 aa)).

This sequence belongs to the UFL1 family.

Its function is as follows. E3 UFM1-protein ligase that mediates ufmylation of target proteins. The protein is E3 UFM1-protein ligase 1 homolog of Drosophila simulans (Fruit fly).